The following is a 416-amino-acid chain: Beta sliding clamp (416 aa).

It belongs to the beta sliding clamp family. In terms of assembly, forms a ring-shaped head-to-tail homodimer around DNA which binds and tethers DNA polymerases and other proteins to the DNA. The DNA replisome complex has a single clamp-loading complex (3 tau and 1 each of delta, delta', psi and chi subunits) which binds 3 Pol III cores (1 core on the leading strand and 2 on the lagging strand) each with a beta sliding clamp dimer. Additional proteins in the replisome are other copies of gamma, psi and chi, Ssb, DNA helicase and RNA primase.

It localises to the cytoplasm. Functionally, confers DNA tethering and processivity to DNA polymerases and other proteins. Acts as a clamp, forming a ring around DNA (a reaction catalyzed by the clamp-loading complex) which diffuses in an ATP-independent manner freely and bidirectionally along dsDNA. Initially characterized for its ability to contact the catalytic subunit of DNA polymerase III (Pol III), a complex, multichain enzyme responsible for most of the replicative synthesis in bacteria; Pol III exhibits 3'-5' exonuclease proofreading activity. The beta chain is required for initiation of replication as well as for processivity of DNA replication. In Chlamydia trachomatis serovar D (strain ATCC VR-885 / DSM 19411 / UW-3/Cx), this protein is Beta sliding clamp (dnaN).